The chain runs to 259 residues: Major prion protein (259 aa).

The signal sequence occupies residues 1–24 (MGKIQLGYWILVLFIVTWSDLGLC). Residues 25-235 (KKPKPRPGGG…EYEAAAQRAY (211 aa)) are interaction with GRB2, ERI3 and SYN1. The disordered stretch occupies residues 29-110 (PRPGGGWNSG…GYNKWKPDKP (82 aa)). Residues glycine 63, glycine 64, histidine 72, glycine 74, histidine 82, glycine 84, histidine 92, and glycine 94 each coordinate Cu(2+). A compositionally biased stretch (gly residues) spans 91-101 (PHGGSNWGQGG). Cysteine 184 and cysteine 219 form a disulfide bridge. 2 N-linked (GlcNAc...) asparagine glycosylation sites follow: asparagine 186 and asparagine 202. Asparagine 236 carries GPI-anchor amidated asparagine lipidation. The propeptide at 237–259 (MAFFSAPPVTLLFLSFLIFLIVS) is removed in mature form.

It belongs to the prion family. As to quaternary structure, monomer and homodimer. Has a tendency to aggregate into amyloid fibrils containing a cross-beta spine, formed by a steric zipper of superposed beta-strands. Soluble oligomers may represent an intermediate stage on the path to fibril formation. Copper binding may promote oligomerization. Interacts with GRB2, APP, ERI3/PRNPIP and SYN1. Mislocalized cytosolically exposed PrP interacts with MGRN1; this interaction alters MGRN1 subcellular location and causes lysosomal enlargement. Interacts with KIAA1191.

It is found in the cell membrane. The protein localises to the golgi apparatus. In terms of biological role, its primary physiological function is unclear. Has cytoprotective activity against internal or environmental stresses. May play a role in neuronal development and synaptic plasticity. May be required for neuronal myelin sheath maintenance. May play a role in iron uptake and iron homeostasis. Soluble oligomers are toxic to cultured neuroblastoma cells and induce apoptosis (in vitro). Association with GPC1 (via its heparan sulfate chains) targets PRNP to lipid rafts. Also provides Cu(2+) or Zn(2+) for the ascorbate-mediated GPC1 deaminase degradation of its heparan sulfate side chains. In Trichosurus vulpecula (Brush-tailed possum), this protein is Major prion protein (PRNP).